Reading from the N-terminus, the 336-residue chain is MSIIVERLLSRESAYGDAVEDFPLRPQTLRQYIGQNKAKHNLEVFIEAAKMREETLDHVLLYGPPGLGKTTLANIIANEMGVNVKTTSGPAIGRPGDLAAVLTALQPGDVLFIDEIHRLHRSIEEVLYPAMEDFCLDIVIGKGPSARSVRLDLPPFTLVGATTRAGALSAPLRDRFGVLSRVEYYTVDQLSAIVERTAEVFEVEIDSLAALEIARRARGTPRIANRLLRRVRDFAQVRGNGTVTMEITQMALELLQVDKLGLDHIDHKLLLGIIEKFRGGPVGLETVSAPIGEESHTIEDVYEPYLLQIGFLQRTPRGRIVTPLAYEHFGMEIPKV.

The segment at 1–185 is large ATPase domain (RuvB-L); that stretch reads MSIIVERLLS…FGVLSRVEYY (185 aa). Residues Leu-24, Arg-25, Gly-66, Lys-69, Thr-70, Thr-71, 132 to 134, Arg-175, Tyr-185, and Arg-222 contribute to the ATP site; that span reads EDF. Thr-70 lines the Mg(2+) pocket. The tract at residues 186-256 is small ATPAse domain (RuvB-S); that stretch reads TVDQLSAIVE…ITQMALELLQ (71 aa). The segment at 259–336 is head domain (RuvB-H); it reads KLGLDHIDHK…EHFGMEIPKV (78 aa). 2 residues coordinate DNA: Arg-314 and Arg-319.

The protein belongs to the RuvB family. In terms of assembly, homohexamer. Forms an RuvA(8)-RuvB(12)-Holliday junction (HJ) complex. HJ DNA is sandwiched between 2 RuvA tetramers; dsDNA enters through RuvA and exits via RuvB. An RuvB hexamer assembles on each DNA strand where it exits the tetramer. Each RuvB hexamer is contacted by two RuvA subunits (via domain III) on 2 adjacent RuvB subunits; this complex drives branch migration. In the full resolvosome a probable DNA-RuvA(4)-RuvB(12)-RuvC(2) complex forms which resolves the HJ.

It localises to the cytoplasm. It catalyses the reaction ATP + H2O = ADP + phosphate + H(+). The RuvA-RuvB-RuvC complex processes Holliday junction (HJ) DNA during genetic recombination and DNA repair, while the RuvA-RuvB complex plays an important role in the rescue of blocked DNA replication forks via replication fork reversal (RFR). RuvA specifically binds to HJ cruciform DNA, conferring on it an open structure. The RuvB hexamer acts as an ATP-dependent pump, pulling dsDNA into and through the RuvAB complex. RuvB forms 2 homohexamers on either side of HJ DNA bound by 1 or 2 RuvA tetramers; 4 subunits per hexamer contact DNA at a time. Coordinated motions by a converter formed by DNA-disengaged RuvB subunits stimulates ATP hydrolysis and nucleotide exchange. Immobilization of the converter enables RuvB to convert the ATP-contained energy into a lever motion, pulling 2 nucleotides of DNA out of the RuvA tetramer per ATP hydrolyzed, thus driving DNA branch migration. The RuvB motors rotate together with the DNA substrate, which together with the progressing nucleotide cycle form the mechanistic basis for DNA recombination by continuous HJ branch migration. Branch migration allows RuvC to scan DNA until it finds its consensus sequence, where it cleaves and resolves cruciform DNA. This chain is Holliday junction branch migration complex subunit RuvB, found in Bacillus cereus (strain ATCC 14579 / DSM 31 / CCUG 7414 / JCM 2152 / NBRC 15305 / NCIMB 9373 / NCTC 2599 / NRRL B-3711).